Consider the following 1553-residue polypeptide: ABC-type transporter cctS (1553 aa).

Helical transmembrane passes span 27–47, 90–110, 114–134, and 151–171; these read LIPLTACLASAIACLISYFHA, LEVALILAEISIAIFLLIFSG, DLTSVFASAVSSIYLLLILFV, and SVLYTLQWTCLTAIVHAAILG. A glycan (N-linked (GlcNAc...) asparagine) is linked at Asn176. Transmembrane regions (helical) follow at residues 177–197, 286–306, 324–344, 413–433, and 438–458; these read FTIATLVRFALFTFLCLFHWT, LLWQGAWATLNSFAVFVPPVL, TAWLYVTGLLVAGIVAGVAGC, GYLYLVWITFPVQTAIGTYLL, and GISGIVGVALMLGLLPLNILI. The ABC transmembrane type-1 1 domain occupies 293–582; sequence ATLNSFAVFV…IADAITFLLR (290 aa). N-linked (GlcNAc...) asparagine glycosylation occurs at Asn524. 2 consecutive transmembrane segments (helical) span residues 527 to 547 and 550 to 570; these read TFFSLPLIVTILTLFFYTVVW and SMGTAVAFPALVIFSILRIPF. Asn617 carries an N-linked (GlcNAc...) asparagine glycan. One can recognise an ABC transporter 1 domain in the interval 635–874; it reads NKRSDIQLTE…GRIDADIMQN (240 aa). 670-677 is a binding site for ATP; it reads GPSGSGKS. A glycan (N-linked (GlcNAc...) asparagine) is linked at Asn725. Residues 948–970 traverse the membrane as a helical segment; the sequence is WYWVLVLFMFGIQQFISLATNIW. One can recognise an ABC transmembrane type-1 2 domain in the interval 951-1255; that stretch reads VLVLFMFGIQ…FVQLYAIVQQ (305 aa). Residue Asn992 is glycosylated (N-linked (GlcNAc...) asparagine). A helical membrane pass occupies residues 1017 to 1037; sequence IYVAICLAYAFFTFARDLIVF. Asn1085 carries N-linked (GlcNAc...) asparagine glycosylation. 4 consecutive transmembrane segments (helical) span residues 1086–1108, 1113–1135, 1204–1224, and 1229–1249; these read ISTFSINTLQIAASLVMIIVFIS, AFLIAAVFICVAYWFVMTIFING, FLGSLILFFTGAFVVWDLESV, and AALVLTYAAMFSESIMWFVQL. The 240-residue stretch at 1294-1533 folds into the ABC transporter 2 domain; that stretch reads VRFDAYTTRY…DDDGIFRRLC (240 aa). Residue 1328-1335 coordinates ATP; it reads GRTGAGKS.

Belongs to the ABC transporter superfamily.

The protein resides in the membrane. It functions in the pathway mycotoxin biosynthesis. Its function is as follows. ABC-type transporter; part of the gene cluster that mediates the biosynthesis of the mycotoxin cyclochlorotine, a hepatotoxic and carcinogenic cyclic chlorinated pentapeptide. CctS is essential for the biosynthesis of cyclochlorotine, maybe as a chloride channel that supplies chloride for chlorination by cctP2. This chain is ABC-type transporter cctS, found in Talaromyces islandicus (Penicillium islandicum).